The sequence spans 749 residues: Formate acetyltransferase (749 aa).

A PFL domain is found at 3 to 619; sequence ETNKNHATAW…KTGNTPDGRK (617 aa). Residue Cys413 is the S-acetylcysteine intermediate of the active site. The active-site Cysteine radical intermediate is Cys414. The Glycine radical domain maps to 626 to 749; it reads PGANPMHGRD…VISRTFHESM (124 aa). Gly724 carries the post-translational modification Glycine radical.

The protein belongs to the glycyl radical enzyme (GRE) family. PFL subfamily. As to quaternary structure, homodimer.

It is found in the cytoplasm. It carries out the reaction formate + acetyl-CoA = pyruvate + CoA. It participates in fermentation; pyruvate fermentation; formate from pyruvate: step 1/1. Functionally, catalyzes the conversion of pyruvate to formate and acetyl-CoA. The protein is Formate acetyltransferase (pflB) of Staphylococcus aureus (strain USA300).